The chain runs to 196 residues: Imidazoleglycerol-phosphate dehydratase (196 aa).

It belongs to the imidazoleglycerol-phosphate dehydratase family.

Its subcellular location is the cytoplasm. It carries out the reaction D-erythro-1-(imidazol-4-yl)glycerol 3-phosphate = 3-(imidazol-4-yl)-2-oxopropyl phosphate + H2O. It functions in the pathway amino-acid biosynthesis; L-histidine biosynthesis; L-histidine from 5-phospho-alpha-D-ribose 1-diphosphate: step 6/9. In Halobacterium salinarum (strain ATCC 700922 / JCM 11081 / NRC-1) (Halobacterium halobium), this protein is Imidazoleglycerol-phosphate dehydratase.